The primary structure comprises 179 residues: Replication restart protein DnaT (179 aa).

Residues 156 to 179 are disordered; the sequence is GGLPKRDVNTVSEPDSQIPPGFRG.

This sequence belongs to the DnaT family. In terms of assembly, homooligomerizes. Interacts with PriB. Component of the replication restart primosome. Primosome assembly occurs via a 'hand-off' mechanism. PriA binds to replication forks, subsequently PriB then DnaT bind; DnaT then displaces ssDNA to generate the helicase loading substrate.

Its function is as follows. Involved in the restart of stalled replication forks, which reloads the replicative helicase on sites other than the origin of replication. Can function in multiple replication restart pathways. Displaces ssDNA from a PriB-ssDNA complex. Probably forms a spiral filament on ssDNA. This Escherichia coli O17:K52:H18 (strain UMN026 / ExPEC) protein is Replication restart protein DnaT.